The primary structure comprises 134 residues: Small ribosomal subunit protein uS9 (134 aa).

Belongs to the universal ribosomal protein uS9 family.

The protein is Small ribosomal subunit protein uS9 of Pseudothermotoga lettingae (strain ATCC BAA-301 / DSM 14385 / NBRC 107922 / TMO) (Thermotoga lettingae).